A 229-amino-acid polypeptide reads, in one-letter code: Small ribosomal subunit protein uS5 (229 aa).

Residues 61–124 (LEEQVLDVKL…AHAKLSLIKV (64 aa)) enclose the S5 DRBM domain.

The protein belongs to the universal ribosomal protein uS5 family. Part of the 30S ribosomal subunit. Contacts protein S4.

In terms of biological role, with S4 and S12 plays an important role in translational accuracy. The chain is Small ribosomal subunit protein uS5 from Methanococcus maripaludis (strain C6 / ATCC BAA-1332).